The sequence spans 103 residues: Large ribosomal subunit protein bL21 (103 aa).

Belongs to the bacterial ribosomal protein bL21 family. Part of the 50S ribosomal subunit. Contacts protein L20.

Its function is as follows. This protein binds to 23S rRNA in the presence of protein L20. This chain is Large ribosomal subunit protein bL21, found in Burkholderia ambifaria (strain MC40-6).